We begin with the raw amino-acid sequence, 633 residues long: Leucine-rich repeat and IQ domain-containing protein 3 (633 aa).

LRR repeat units lie at residues 51–72 (SLRVCIFSNNFVTDIQPLQGCK), 73–94 (KLIKLDLHGNQIKTLPDRTFWN), and 98–119 (NLKLLYLHDNGFAKLKNICVLS). An LRRCT domain is found at 132 to 179 (CPVSLKKGYRHVLVNSIWPLKALDHHVISDEEIIQNWHLPERFKTFSQ). Residues 215–244 (HNSPVLIIQRWIRGFIVRKHLSPYFTRKRH) form the IQ domain. The tract at residues 322–343 (NSKQPRHHIQKGQNEMKSDSED) is disordered. The stretch at 556–616 (EKREKRKYKQ…AKVEFINTYY (61 aa)) forms a coiled coil.

The polypeptide is Leucine-rich repeat and IQ domain-containing protein 3 (Lrriq3) (Rattus norvegicus (Rat)).